We begin with the raw amino-acid sequence, 761 residues long: MNQSLLVTKRDGRTERINLDKIHRVLDWAAEGLNNVSVSQVELRSHIQFYDGIKTSDIHETIIKAAADLISRDAPDYQYLAARLAIFHLRKKAFGQFEPPALYHHVVKMVELGKYDNHLLEDYTEEEFKQMDSFIVHDRDMTFSYAAVKQLEGKYLVQNRVTGEIYESAQFLYILVAACLFSNYPRETRLDYVKRFYDAVSTFKISLPTPIMSGVRTPTRQFSSCVLIECGDSLDSINATSSAIVKYVSQRAGIGINAGRIRALGSPIRGGEAFHTGCIPFYKHFQTAVKSCSQGGVRGGAATLFYPMWHLEVESLLVLKNNRGVEGNRVRHMDYGVQINKLMYTRLLKGGDITLFSPSDVPGLYDAFFADQDEFERLYVKYEHDDSIRKQRVKAVELFSLMMQERASTGRIYIQNVDHCNTHSPFDPVVAPVRQSNLCLEIALPTKPLNDVNDENGEIALCTLSAFNLGAIKTLDELEELAILAVRALDALLDYQDYPIPAAKRGAMGRRTLGIGVINFAYWLAKNGKRYSDGSANNLTHKTFEAIQYYLLKASNELAKEQGACPWFNETTYAKGILPIDTYKKDLDAIVNEPLHYDWEQLRESIKTHGLRNSTLSALMPSETSSQISNATNGIEPPRGYVSIKASKDGILRQVVPDYEHLKDAYELLWEMPNNDGYLQLVGIMQKFIDQSISANTNYDPSRFPSGKVPMQQLLKDLLTAYKFGVKTLYYQNTRDGAEDAQDDLAPSIQDDGCESGACKI.

Residues 5-95 (LLVTKRDGRT…IFHLRKKAFG (91 aa)) form the ATP-cone domain. Residues Lys9, 15–21 (ERINLDK), Thr55, and Lys91 contribute to the ATP site. Residue Thr209 coordinates GDP. A disulfide bridge links Cys225 with Cys462. Residues 232-234 (DSL), Arg262, and Arg269 contribute to the dTTP site. GDP is bound at residue Asn437. The active-site Proton acceptor is the Asn437. Catalysis depends on Cys439, which acts as the Cysteine radical intermediate. GDP contacts are provided by residues Glu441 and 623–625 (ETS). Glu441 acts as the Proton acceptor in catalysis.

This sequence belongs to the ribonucleoside diphosphate reductase large chain family. As to quaternary structure, tetramer of two alpha (R1) and two beta (R2) subunits. The B1 protein is a dimer of alpha subunits. A radical transfer pathway occurs between 'Tyr-122' of R2 and R1.

It catalyses the reaction a 2'-deoxyribonucleoside 5'-diphosphate + [thioredoxin]-disulfide + H2O = a ribonucleoside 5'-diphosphate + [thioredoxin]-dithiol. With respect to regulation, under complex allosteric control mediated by deoxynucleoside triphosphates and ATP binding to separate specificity and activation sites on the alpha subunit. The type of nucleotide bound at the specificity site determines substrate preference. It seems probable that ATP makes the enzyme reduce CDP and UDP, dGTP favors ADP reduction and dTTP favors GDP reduction. Stimulated by ATP and inhibited by dATP binding to the activity site. Functionally, provides the precursors necessary for DNA synthesis. Catalyzes the biosynthesis of deoxyribonucleotides from the corresponding ribonucleotides. R1 contains the binding sites for both substrates and allosteric effectors and carries out the actual reduction of the ribonucleotide. The chain is Ribonucleoside-diphosphate reductase 1 subunit alpha (nrdA) from Salmonella typhimurium (strain LT2 / SGSC1412 / ATCC 700720).